Here is a 235-residue protein sequence, read N- to C-terminus: Class A basic helix-loop-helix protein 9 (235 aa).

Disordered stretches follow at residues 1–69 (MLRG…RRMA) and 132–235 (GHLE…HPRS). Basic residues predominate over residues 55 to 67 (RRRARPVRSKARR). In terms of domain architecture, bHLH spans 65–117 (ARRMAANVRERKRILDYNEAFNALRRALRHDLGGKRLSKIATLRRAIHRIAAL).

Heterodimer. Efficient DNA binding requires dimerization with another bHLH protein. Interacts with TCF3, TCF4, and TCF12.

It is found in the nucleus. The protein localises to the cytoplasm. In terms of biological role, transcription factor, which play a role in limb development. Is an essential player in the regulatory network governing transcription of genes implicated in limb morphogenesis. This chain is Class A basic helix-loop-helix protein 9 (BHLHA9), found in Homo sapiens (Human).